The following is a 257-amino-acid chain: Urease accessory protein UreD 3 (257 aa).

Residues 1–22 (MSVRATARLRAEPDGRDGTALP) form a disordered region.

The protein belongs to the UreD family. As to quaternary structure, ureD, UreF and UreG form a complex that acts as a GTP-hydrolysis-dependent molecular chaperone, activating the urease apoprotein by helping to assemble the nickel containing metallocenter of UreC. The UreE protein probably delivers the nickel.

The protein resides in the cytoplasm. In terms of biological role, required for maturation of urease via the functional incorporation of the urease nickel metallocenter. The sequence is that of Urease accessory protein UreD 3 from Streptomyces griseus subsp. griseus (strain JCM 4626 / CBS 651.72 / NBRC 13350 / KCC S-0626 / ISP 5235).